The sequence spans 199 residues: UPF0301 protein Ajs_3573 (199 aa).

The protein belongs to the UPF0301 (AlgH) family.

The protein is UPF0301 protein Ajs_3573 of Acidovorax sp. (strain JS42).